Here is a 199-residue protein sequence, read N- to C-terminus: MVLVKICGLMHSEDILAVNTAGADFAGFVFAPGRHQISLEQALSLKQLLHPKIKTVGVFVNEPVAEILAIYQAGAIDVAQLHGKSTPAEITQLQQAGLKVIQVFERQAIDLTSMADYLMVDSGKGSGQLLNLKAIPHISRPLILAGGLTPLNVRQAVQLVQPTMVDVSSGVETNGHKDADKITQFIQQAKEDIIYEDIK.

Belongs to the TrpF family.

It catalyses the reaction N-(5-phospho-beta-D-ribosyl)anthranilate = 1-(2-carboxyphenylamino)-1-deoxy-D-ribulose 5-phosphate. Its pathway is amino-acid biosynthesis; L-tryptophan biosynthesis; L-tryptophan from chorismate: step 3/5. The chain is N-(5'-phosphoribosyl)anthranilate isomerase from Lacticaseibacillus casei (strain BL23) (Lactobacillus casei).